Consider the following 210-residue polypeptide: uncharacterized protein (210 aa).

Residues 90–193 (KPDQIIVNEY…RISITFRNVI (104 aa)) form the Fe2OG dioxygenase domain.

This is an uncharacterized protein from Acanthamoeba polyphaga (Amoeba).